The primary structure comprises 482 residues: Membrane-bound lytic murein transglycosylase F (482 aa).

A signal peptide spans 1-18 (MKGLFLRIITALALLFWA). The interval 19 to 267 (IDMVFPWQFL…NLKEKYLGHI (249 aa)) is non-LT domain. An LT domain region spans residues 268-482 (SQFDYVDTRS…NLEEIKENED (215 aa)). The active site involves Glu-312. Over residues 457-470 (ENQTTNDNANNESA) the composition is skewed to polar residues. The tract at residues 457 to 482 (ENQTTNDNANNESAVKNLEEIKENED) is disordered. The segment covering 473-482 (NLEEIKENED) has biased composition (basic and acidic residues).

The protein in the N-terminal section; belongs to the bacterial solute-binding protein 3 family. In the C-terminal section; belongs to the transglycosylase Slt family.

It localises to the cell outer membrane. It catalyses the reaction Exolytic cleavage of the (1-&gt;4)-beta-glycosidic linkage between N-acetylmuramic acid (MurNAc) and N-acetylglucosamine (GlcNAc) residues in peptidoglycan, from either the reducing or the non-reducing ends of the peptidoglycan chains, with concomitant formation of a 1,6-anhydrobond in the MurNAc residue.. Its function is as follows. Murein-degrading enzyme that degrades murein glycan strands and insoluble, high-molecular weight murein sacculi, with the concomitant formation of a 1,6-anhydromuramoyl product. Lytic transglycosylases (LTs) play an integral role in the metabolism of the peptidoglycan (PG) sacculus. Their lytic action creates space within the PG sacculus to allow for its expansion as well as for the insertion of various structures such as secretion systems and flagella. This chain is Membrane-bound lytic murein transglycosylase F, found in Haemophilus influenzae (strain PittGG).